We begin with the raw amino-acid sequence, 56 residues long: Large ribosomal subunit protein bL32 (56 aa).

A disordered region spans residues 1–38 (MAVQQNKKSRSRRDMRRSHDALTTAAVSVDKTSGETHL). The span at 7-16 (KKSRSRRDMR) shows a compositional bias: basic residues.

The protein belongs to the bacterial ribosomal protein bL32 family.

This chain is Large ribosomal subunit protein bL32, found in Histophilus somni (strain 129Pt) (Haemophilus somnus).